The following is a 269-amino-acid chain: Flagellar brake protein YcgR (269 aa).

A disordered region spans residues 1 to 42 (MLREPMNQHDAPGPAETGADSDAETDAETDAETDAGAADDRY). Over residues 19 to 33 (ADSDAETDAETDAET) the composition is skewed to acidic residues. The PilZ domain occupies 149–261 (QRRRHFRART…MENFLQRLVF (113 aa)).

Belongs to the YcgR family. Monomer. Interacts with the flagellar basal bodies.

The protein resides in the bacterial flagellum basal body. In terms of biological role, acts as a flagellar brake, regulating swimming and swarming in a bis-(3'-5') cyclic diguanylic acid (c-di-GMP)-dependent manner. Binds 1 c-di-GMP dimer per subunit. Increasing levels of c-di-GMP lead to decreased motility. The chain is Flagellar brake protein YcgR from Cupriavidus taiwanensis (strain DSM 17343 / BCRC 17206 / CCUG 44338 / CIP 107171 / LMG 19424 / R1) (Ralstonia taiwanensis (strain LMG 19424)).